A 661-amino-acid polypeptide reads, in one-letter code: Meiotic coiled-coil protein 1 (661 aa).

5 coiled-coil regions span residues 38–78 (LDAL…IIEE), 100–121 (RAIY…ERLS), 143–184 (DIKL…LSIK), 304–320 (ELIQ…EVDL), and 360–387 (LKRL…DNEK). 3 disordered regions span residues 410–446 (QNQE…LRNI), 467–562 (LIDR…TPAS), and 573–592 (LSRT…TPTQ). The segment covering 414–430 (NISSNDNSKSSPESSPP) has biased composition (low complexity). Basic and acidic residues predominate over residues 436–445 (GKIENKKLRN). 3 stretches are compositionally biased toward polar residues: residues 472–481 (VNQSPDTRSV), 548–562 (HNSV…TPAS), and 582–592 (FTNSLDDTPTQ).

This Schizosaccharomyces pombe (strain 972 / ATCC 24843) (Fission yeast) protein is Meiotic coiled-coil protein 1 (mcp1).